We begin with the raw amino-acid sequence, 1031 residues long: Serine-repeat antigen protein 6 (1031 aa).

The first 24 residues, 1–24 (MICPIFFLYIINVLFTQYFIKCEG), serve as a signal peptide directing secretion. A glycan (N-linked (GlcNAc...) asparagine) is linked at Asn74. Residues 91–101 (KVVSSSESGKG) show a composition bias toward low complexity. The interval 91–163 (KVVSSSESGK…TESSSETLNK (73 aa)) is disordered. Over residues 104-139 (VSHTKVTSEGLSDTQPNVTQSVSSSTHTPGSLDSTM) the composition is skewed to polar residues. Asn120 is a glycosylation site (N-linked (GlcNAc...) asparagine). Residues 140-158 (STEQHSSVSQSSLPTESSS) show a composition bias toward low complexity. Asn449 is a glycosylation site (N-linked (GlcNAc...) asparagine). Residues 490–567 (TLPSESPSES…GDTNYVYDFD (78 aa)) form a disordered region. Residues 492–505 (PSESPSESSSKSDS) are compositionally biased toward low complexity. Over residues 511-535 (NDKDKNEDKDDMSKNSKEEFKNDDK) the composition is skewed to basic and acidic residues. A glycan (N-linked (GlcNAc...) asparagine) is linked at Asn544. Low complexity predominate over residues 554 to 564 (NINNGDTNYVY). An N-linked (GlcNAc...) asparagine glycan is attached at Asn573. Cys644 is an active-site residue. An N-linked (GlcNAc...) asparagine glycan is attached at Asn674. Residues His810 and Asn835 contribute to the active site. Asn929 and Asn974 each carry an N-linked (GlcNAc...) asparagine glycan.

This sequence belongs to the peptidase C1 family. Post-translationally, just prior to merozoite egress from host erythrocytes, proteolytically cleaved by SUB1 to generate the active 75kDa form.

The protein localises to the parasitophorous vacuole lumen. It localises to the parasitophorous vacuole membrane. Its function is as follows. Cysteine protease which plays an essential role in merozoite egress from host erythrocytes. May cleave host SPTB/beta spectrin and ANK1/ankyrin-1 which disrupts host erythrocyte actin cytoskeleton and leads to host erythrocyte cell membrane rupture. This Plasmodium falciparum (isolate 3D7) protein is Serine-repeat antigen protein 6.